Here is a 106-residue protein sequence, read N- to C-terminus: Ferredoxin (106 aa).

Positions 8 and 16 each coordinate [3Fe-4S] cluster. C20, C39, C42, and C45 together coordinate [4Fe-4S] cluster. One can recognise a 4Fe-4S ferredoxin-type domain in the interval R30–D59. C49 serves as a coordination point for [3Fe-4S] cluster. The segment at P81–D106 is disordered.

Requires [4Fe-4S] cluster as cofactor. [3Fe-4S] cluster serves as cofactor.

Functionally, ferredoxins are iron-sulfur proteins that transfer electrons in a wide variety of metabolic reactions. The polypeptide is Ferredoxin (fdxA) (Mycolicibacterium smegmatis (Mycobacterium smegmatis)).